The primary structure comprises 232 residues: Large ribosomal subunit protein uL1 (232 aa).

Belongs to the universal ribosomal protein uL1 family. As to quaternary structure, part of the 50S ribosomal subunit.

Binds directly to 23S rRNA. The L1 stalk is quite mobile in the ribosome, and is involved in E site tRNA release. Functionally, protein L1 is also a translational repressor protein, it controls the translation of the L11 operon by binding to its mRNA. This is Large ribosomal subunit protein uL1 from Lysinibacillus sphaericus (strain C3-41).